A 360-amino-acid chain; its full sequence is NAD(P)H-quinone oxidoreductase subunit 1, chloroplastic (360 aa).

Helical transmembrane passes span 27–47 (IWIFVPIFSLVLGIITGVLVI), 98–118 (FSIGPSIAVISILLSYSVIPF), 129–149 (IGIFLWIAISSIAPIGLLMSG), 165–185 (AAQSISYEIPLTLCVLSISLL), 203–223 (FWGWNLWRQPIGFIIFLISSL), 253–273 (FGLFYVASYLNLLISSLFVTV), 297–317 (IFGTTIGIFITLAKTYLFLFV), and 340–360 (FLLPISLGNLLLTTSFQLFSL).

It belongs to the complex I subunit 1 family. As to quaternary structure, NDH is composed of at least 16 different subunits, 5 of which are encoded in the nucleus.

It is found in the plastid. It localises to the chloroplast thylakoid membrane. The catalysed reaction is a plastoquinone + NADH + (n+1) H(+)(in) = a plastoquinol + NAD(+) + n H(+)(out). It carries out the reaction a plastoquinone + NADPH + (n+1) H(+)(in) = a plastoquinol + NADP(+) + n H(+)(out). Functionally, NDH shuttles electrons from NAD(P)H:plastoquinone, via FMN and iron-sulfur (Fe-S) centers, to quinones in the photosynthetic chain and possibly in a chloroplast respiratory chain. The immediate electron acceptor for the enzyme in this species is believed to be plastoquinone. Couples the redox reaction to proton translocation, and thus conserves the redox energy in a proton gradient. The chain is NAD(P)H-quinone oxidoreductase subunit 1, chloroplastic from Arabidopsis thaliana (Mouse-ear cress).